Here is a 197-residue protein sequence, read N- to C-terminus: Protocatechuate 3,4-dioxygenase alpha chain (197 aa).

R130 lines the 3,4-dihydroxybenzoate pocket.

The protein belongs to the intradiol ring-cleavage dioxygenase family. As to quaternary structure, the enzyme is an oligomer of 12 copies of the alpha and beta chains. Fe(3+) serves as cofactor.

It carries out the reaction 3,4-dihydroxybenzoate + O2 = 3-carboxy-cis,cis-muconate + 2 H(+). It functions in the pathway aromatic compound metabolism; beta-ketoadipate pathway; 3-carboxy-cis,cis-muconate from 3,4-dihydroxybenzoate: step 1/1. In terms of biological role, plays an essential role in the utilization of numerous aromatic and hydroaromatic compounds via the beta-ketoadipate pathway. This is Protocatechuate 3,4-dioxygenase alpha chain (pcaG) from Burkholderia cepacia (Pseudomonas cepacia).